Consider the following 291-residue polypeptide: Putative ribosomal protein uL16-like, mitochondrial (291 aa).

A mitochondrion-targeting transit peptide spans 1 to 27; sequence MQRFMFSRVVEHQRQISRGFLSLVPSL. The segment covering 127-137 has biased composition (basic and acidic residues); that stretch reads VHETSNNEKKQ. Positions 127–173 are disordered; sequence VHETSNNEKKQQKQKSSVNEKKPKKKKKSSISDIPRRTKFQKHHRGR. Basic residues predominate over residues 163–173; it reads RTKFQKHHRGR.

It belongs to the universal ribosomal protein uL16 family.

It localises to the mitochondrion. In terms of biological role, could be a component of the large subunit of mitochondrial ribosome. This chain is Putative ribosomal protein uL16-like, mitochondrial, found in Arabidopsis thaliana (Mouse-ear cress).